Here is a 97-residue protein sequence, read N- to C-terminus: Antitoxin TacA2 (97 aa).

It belongs to the TacA antitoxin family. In terms of assembly, homodimer. Forms a complex with cognate toxin TacT2.

Its function is as follows. Antitoxin component of a type II toxin-antitoxin (TA) system. Counteracts the toxic effect of cognate toxin TacT2. In terms of biological role, the TacA2-TacT2 complex both represses and derepresses expression of its own operon. This is Antitoxin TacA2 from Salmonella enteritidis.